A 342-amino-acid polypeptide reads, in one-letter code: Periplasmic protein TorT (342 aa).

A signal peptide spans 1–18 (MRVLLFLLLSLFMLPAFS).

This sequence belongs to the bacterial solute-binding protein 2 family.

It localises to the periplasm. In terms of biological role, upon binding a putative inducer it probably interacts with TorS and allows it to play a role in the induction of the torCAD operon for trimethylamine N-oxide reductase. The chain is Periplasmic protein TorT (torT) from Escherichia coli (strain K12).